Reading from the N-terminus, the 273-residue chain is 4-hydroxy-tetrahydrodipicolinate reductase (273 aa).

NAD(+) is bound by residues 12 to 17 and Glu-38; that span reads GAGGRM. Arg-39 contributes to the NADP(+) binding site. Residues 102–104 and 126–129 each bind NAD(+); these read GTT and AANF. His-159 acts as the Proton donor/acceptor in catalysis. A (S)-2,3,4,5-tetrahydrodipicolinate-binding site is contributed by His-160. Lys-163 functions as the Proton donor in the catalytic mechanism. 169–170 contributes to the (S)-2,3,4,5-tetrahydrodipicolinate binding site; it reads GT.

This sequence belongs to the DapB family. In terms of assembly, homotetramer.

The protein resides in the cytoplasm. It catalyses the reaction (S)-2,3,4,5-tetrahydrodipicolinate + NAD(+) + H2O = (2S,4S)-4-hydroxy-2,3,4,5-tetrahydrodipicolinate + NADH + H(+). The enzyme catalyses (S)-2,3,4,5-tetrahydrodipicolinate + NADP(+) + H2O = (2S,4S)-4-hydroxy-2,3,4,5-tetrahydrodipicolinate + NADPH + H(+). It participates in amino-acid biosynthesis; L-lysine biosynthesis via DAP pathway; (S)-tetrahydrodipicolinate from L-aspartate: step 4/4. In terms of biological role, catalyzes the conversion of 4-hydroxy-tetrahydrodipicolinate (HTPA) to tetrahydrodipicolinate. The chain is 4-hydroxy-tetrahydrodipicolinate reductase from Escherichia coli (strain K12 / MC4100 / BW2952).